A 197-amino-acid chain; its full sequence is uncharacterized protein (197 aa).

The protein belongs to the NAD(P)H dehydrogenase (quinone) family.

This is an uncharacterized protein from Bacillus subtilis (strain 168).